The following is a 360-amino-acid chain: Photosystem II protein D1 1 (360 aa).

A run of 3 helical transmembrane segments spans residues 29 to 46 (YIGW…TATT), 118 to 133 (HFLI…QWEL), and 142 to 156 (WICV…AATA). Histidine 118 serves as a coordination point for chlorophyll a. Residue tyrosine 126 coordinates pheophytin a. [CaMn4O5] cluster contacts are provided by aspartate 170 and glutamate 189. Residues 197 to 218 (FHMLGVAGVFGGALFAAMHGSL) form a helical membrane-spanning segment. Histidine 198 contacts chlorophyll a. A quinone is bound by residues histidine 215 and 264-265 (SF). Histidine 215 serves as a coordination point for Fe cation. Fe cation is bound at residue histidine 272. The chain crosses the membrane as a helical span at residues 274-288 (FLGAWPVVGIWFAAL). [CaMn4O5] cluster-binding residues include histidine 332, glutamate 333, aspartate 342, and alanine 344. Residues 345 to 360 (SGDAQMVALNAPAIEG) constitute a propeptide that is removed on maturation.

The protein belongs to the reaction center PufL/M/PsbA/D family. PSII is composed of 1 copy each of membrane proteins PsbA, PsbB, PsbC, PsbD, PsbE, PsbF, PsbH, PsbI, PsbJ, PsbK, PsbL, PsbM, PsbT, PsbX, PsbY, PsbZ, Psb30/Ycf12, peripheral proteins PsbO, CyanoQ (PsbQ), PsbU, PsbV and a large number of cofactors. It forms dimeric complexes. The D1/D2 heterodimer binds P680, chlorophylls that are the primary electron donor of PSII, and subsequent electron acceptors. It shares a non-heme iron and each subunit binds pheophytin, quinone, additional chlorophylls, carotenoids and lipids. D1 provides most of the ligands for the Mn4-Ca-O5 cluster of the oxygen-evolving complex (OEC). There is also a Cl(-1) ion associated with D1 and D2, which is required for oxygen evolution. The PSII complex binds additional chlorophylls, carotenoids and specific lipids. is required as a cofactor. C-terminally processed by CtpA; processing is essential to allow assembly of the oxygen-evolving complex and photosynthetic growth. Post-translationally, tyr-161 forms a radical intermediate that is referred to as redox-active TyrZ, YZ or Y-Z. In terms of processing, C-terminally processed by CtpA; processing is essential to allow assembly of the oxygen-evolving complex and thus photosynthetic growth.

The protein localises to the cellular thylakoid membrane. It catalyses the reaction 2 a plastoquinone + 4 hnu + 2 H2O = 2 a plastoquinol + O2. Functionally, photosystem II (PSII) is a light-driven water:plastoquinone oxidoreductase that uses light energy to abstract electrons from H(2)O, generating O(2) and a proton gradient subsequently used for ATP formation. It consists of a core antenna complex that captures photons, and an electron transfer chain that converts photonic excitation into a charge separation. The D1/D2 (PsbA/PsbD) reaction center heterodimer binds P680, the primary electron donor of PSII as well as several subsequent electron acceptors. The chain is Photosystem II protein D1 1 from Synechocystis sp. (strain ATCC 27184 / PCC 6803 / Kazusa).